The primary structure comprises 201 residues: 3-isopropylmalate dehydratase small subunit (201 aa).

This sequence belongs to the LeuD family. LeuD type 1 subfamily. Heterodimer of LeuC and LeuD.

The enzyme catalyses (2R,3S)-3-isopropylmalate = (2S)-2-isopropylmalate. The protein operates within amino-acid biosynthesis; L-leucine biosynthesis; L-leucine from 3-methyl-2-oxobutanoate: step 2/4. Its function is as follows. Catalyzes the isomerization between 2-isopropylmalate and 3-isopropylmalate, via the formation of 2-isopropylmaleate. This is 3-isopropylmalate dehydratase small subunit from Ruegeria sp. (strain TM1040) (Silicibacter sp.).